The chain runs to 243 residues: 1-(5-phosphoribosyl)-5-[(5-phosphoribosylamino)methylideneamino] imidazole-4-carboxamide isomerase (243 aa).

Asp17 functions as the Proton acceptor in the catalytic mechanism. Asp138 acts as the Proton donor in catalysis.

The protein belongs to the HisA/HisF family.

The protein localises to the cytoplasm. The enzyme catalyses 1-(5-phospho-beta-D-ribosyl)-5-[(5-phospho-beta-D-ribosylamino)methylideneamino]imidazole-4-carboxamide = 5-[(5-phospho-1-deoxy-D-ribulos-1-ylimino)methylamino]-1-(5-phospho-beta-D-ribosyl)imidazole-4-carboxamide. Its pathway is amino-acid biosynthesis; L-histidine biosynthesis; L-histidine from 5-phospho-alpha-D-ribose 1-diphosphate: step 4/9. This Deinococcus geothermalis (strain DSM 11300 / CIP 105573 / AG-3a) protein is 1-(5-phosphoribosyl)-5-[(5-phosphoribosylamino)methylideneamino] imidazole-4-carboxamide isomerase.